We begin with the raw amino-acid sequence, 161 residues long: Interleukin-17F (161 aa).

An N-terminal signal peptide occupies residues 1 to 28 (MKGSCETTMVKSLLLLMLGFAIISSGAA). N83 carries an N-linked (GlcNAc...) asparagine glycan. Disulfide bonds link C100/C150 and C105/C152.

It belongs to the IL-17 family. As to quaternary structure, homodimer; disulfide-linked. Heterodimer with IL17A (IL17A-IL17F). Forms complexes with IL17RA and IL17RC receptors with 2:1 binding stoichiometry: two receptor chains for one interleukin molecule. IL17F homodimer forms predominantly complexes with IL17RC homodimer, whereas IL17A-IL17F favors complexes with IL17RA-IL17RC. IL17RA and IL17RC chains cannot distinguish between IL17A and IL17F molecules, potentially enabling the formation of topologically distinct complexes.

The protein localises to the secreted. Functionally, effector cytokine of innate and adaptive immune system involved in antimicrobial host defense and maintenance of tissue integrity. IL17A-IL17F signals via IL17RA-IL17RC heterodimeric receptor complex, triggering homotypic interaction of IL17RA and IL17RC chains with TRAF3IP2 adapter through SEFIR domains. This leads to downstream TRAF6-mediated activation of NF-kappa-B and MAPkinase pathways ultimately resulting in transcriptional activation of cytokines, chemokines, antimicrobial peptides and matrix metalloproteinases, with potential strong immune inflammation. IL17A-IL17F is primarily involved in host defense against extracellular bacteria and fungi by inducing neutrophilic inflammation. As signature effector cytokine of T-helper 17 cells (Th17), primarily induces neutrophil activation and recruitment at infection and inflammatory sites. Stimulates the production of antimicrobial beta-defensins DEFB1, DEFB103A, and DEFB104A by mucosal epithelial cells, limiting the entry of microbes through the epithelial barriers. IL17F homodimer can signal via IL17RC homodimeric receptor complex, triggering downstream activation of TRAF6 and NF-kappa-B signaling pathway. Via IL17RC induces transcriptional activation of IL33, a potent cytokine that stimulates group 2 innate lymphoid cells and adaptive T-helper 2 cells involved in pulmonary allergic response to fungi. Likely via IL17RC, promotes sympathetic innervation of peripheral organs by coordinating the communication between gamma-delta T cells and parenchymal cells. Stimulates sympathetic innervation of thermogenic adipose tissue by driving TGFB1 expression. Regulates the composition of intestinal microbiota and immune tolerance by inducing antimicrobial proteins that specifically control the growth of commensal Firmicutes and Bacteroidetes. The chain is Interleukin-17F (Il17f) from Rattus norvegicus (Rat).